Consider the following 225-residue polypeptide: Probable septum site-determining protein MinC (225 aa).

It belongs to the MinC family. As to quaternary structure, interacts with MinD and FtsZ.

Its function is as follows. Cell division inhibitor that blocks the formation of polar Z ring septums. Rapidly oscillates between the poles of the cell to destabilize FtsZ filaments that have formed before they mature into polar Z rings. Prevents FtsZ polymerization. This Listeria welshimeri serovar 6b (strain ATCC 35897 / DSM 20650 / CCUG 15529 / CIP 8149 / NCTC 11857 / SLCC 5334 / V8) protein is Probable septum site-determining protein MinC.